The chain runs to 217 residues: UPF0502 protein VIBHAR_05349 (217 aa).

It belongs to the UPF0502 family.

The polypeptide is UPF0502 protein VIBHAR_05349 (Vibrio campbellii (strain ATCC BAA-1116)).